A 246-amino-acid chain; its full sequence is 2-C-methyl-D-erythritol 4-phosphate cytidylyltransferase (246 aa).

This sequence belongs to the IspD/TarI cytidylyltransferase family. IspD subfamily.

The catalysed reaction is 2-C-methyl-D-erythritol 4-phosphate + CTP + H(+) = 4-CDP-2-C-methyl-D-erythritol + diphosphate. The protein operates within isoprenoid biosynthesis; isopentenyl diphosphate biosynthesis via DXP pathway; isopentenyl diphosphate from 1-deoxy-D-xylulose 5-phosphate: step 2/6. In terms of biological role, catalyzes the formation of 4-diphosphocytidyl-2-C-methyl-D-erythritol from CTP and 2-C-methyl-D-erythritol 4-phosphate (MEP). In Clostridium tetani (strain Massachusetts / E88), this protein is 2-C-methyl-D-erythritol 4-phosphate cytidylyltransferase.